The chain runs to 769 residues: Subtilisin-like protease 3 (769 aa).

N-linked (GlcNAc...) asparagine glycosylation is found at Asn-68, Asn-102, Asn-108, Asn-295, Asn-316, and Asn-356. Residues 293 to 302 are compositionally biased toward basic residues; the sequence is KINHSNKHKN. The disordered stretch occupies residues 293 to 329; sequence KINHSNKHKNNNNNNNNNDYHNNNKSNYHSHSSAKCQ. The segment covering 303–325 has biased composition (low complexity); sequence NNNNNNNNDYHNNNKSNYHSHSS. The 412-residue stretch at 345 to 756 folds into the Peptidase S8 domain; sequence GYDIIQMEEG…GGFINVYDLV (412 aa). Asp-372 functions as the Charge relay system in the catalytic mechanism. The tract at residues 468–493 is disordered; that stretch reads NIKSSDNIKSSDNINSSDNIKSSDNN. 2 N-linked (GlcNAc...) asparagine glycosylation sites follow: Asn-482 and Asn-515. His-523 acts as the Charge relay system in catalysis. 2 N-linked (GlcNAc...) asparagine glycosylation sites follow: Asn-584 and Asn-616. The active-site Charge relay system is Ser-701. N-linked (GlcNAc...) asparagine glycosylation is present at Asn-720.

Belongs to the peptidase S8 family.

The protein localises to the secreted. The enzyme catalyses Hydrolysis of proteins with broad specificity for peptide bonds, and a preference for a large uncharged residue in P1. Hydrolyzes peptide amides.. Its function is as follows. Serine protease which may cleave PFN/profilin. In Plasmodium falciparum (isolate 3D7), this protein is Subtilisin-like protease 3.